A 474-amino-acid chain; its full sequence is Protein IFIT1 homolog B (474 aa).

TPR repeat units lie at residues 52–85, 95–128, 141–174, 182–216, 218–250, 251–284, 305–339, 340–373, 378–412, and 437–470; these read VGIHNLLAYVKHLKGQNEEALVSLKKAEDLIQKE, LVTWGNFAWVYYHMGRLAEAQTYLDKVENTCKKF, VDCEEGWALAKCGGKNYERAKTCFEKALEGNPEN, AITVYRLDKFNTASGRNKAFSLHVLKRAVRLNPDD, YIRVLLALKLQDEGQEAEGEKYIEEALTSISSQ, AYVFQYAAKFYRRKGSVDKALELLKMALETTPTS, ATNWQPRGQDRETVDRLVQLAICKFEKTIMLKRTF, EMAYVDLAETYAEIGHHRKAEEHFQKGLRMKIFE, QEIHYHYGRFQEHHGKSQDKAITHYLKGLKIEKMS, and VESVSLLGLIHKLKGEVSDALLCYERALRLAADL.

Belongs to the IFIT family.

Its function is as follows. IFIT1B is likely non-functional, lacking the critical antiviral role of IFIT1. Unlike IFIT1, which is essential in the innate immune response as part of an interferon-dependent multiprotein complex, IFIT1B does not prevent the translation of viral RNAs that lack host-specific 2'-O-methylation at their 5' cap. Consequently, it probably cannot inhibit their translation by competing with the host translation machinery. This chain is Protein IFIT1 homolog B, found in Homo sapiens (Human).